The primary structure comprises 591 residues: MSSLIMQVVIPKPAKFFHNNLFSLSSKRHRFSTTTTTRGGRWARCSLQTGNEIQTERRTGGYQPTLWDFSTIQSFDSEYKEEKHLMRAAGMIDQVKMMLQEEVDSIRRLELIDDLRRLGISCHFEREIVEILNSKYYTNNEIDERDLYSTALRFRLLRQYDFSVSQEVFDCFKNAKGTDFKPSLVDDTRGLLQLYEASFLSAQGEETLRLARDFATKFLQKRVLVDKDINLLSSIERALELPTHWRVQMPNARSFIDAYKRRPDMNPTVLELAKLDFNMVQAQFQQELKEASRWWNSTGLVHELPFVRDRIVECYYWTTGVVERRQHGYERIMLTKINALVTTIDDVFDIYGTLEELQLFTTAIQRWDIESMKQLPPYMQICYLALFNFVNEMAYDTLRDKGFDSTPYLRKVWVGLIESYLIEAKWYYKGHKPSLEEYMKNSWISIGGIPILSHLFFRLTDSIEEEAAESMHKYHDIVRASCTILRLADDMGTSLDEVERGDVPKSVQCYMNEKNASEEEAREHVRSLIDQTWKMMNKEMMTSSFSKYFVEVSANLARMAQWIYQHESDGFGMQHSLVNKMLRDLLFHRYE.

The N-terminal 44 residues, 1 to 44 (MSSLIMQVVIPKPAKFFHNNLFSLSSKRHRFSTTTTTRGGRWAR), are a transit peptide targeting the chloroplast. Positions 308, 345, 349, 486, and 489 each coordinate (2E)-geranyl diphosphate. Mg(2+) is bound by residues Asp-345 and Asp-349. The DDXXD motif motif lies at 345 to 349 (DDVFD). Residues Asp-489, Thr-493, and Glu-497 each contribute to the Mg(2+) site.

The protein belongs to the terpene synthase family. Tpsb subfamily. As to quaternary structure, monomer. Requires Mg(2+) as cofactor. Mn(2+) serves as cofactor.

It localises to the plastid. Its subcellular location is the chloroplast. The enzyme catalyses (2E)-geranyl diphosphate + H2O = 1,8-cineole + diphosphate. It carries out the reaction (2E)-geranyl diphosphate = alpha-pinene + diphosphate. The catalysed reaction is (2E)-geranyl diphosphate = beta-pinene + diphosphate. It catalyses the reaction (2E)-geranyl diphosphate + H2O = (S)-alpha-terpineol + diphosphate. The enzyme catalyses (2E)-geranyl diphosphate = beta-myrcene + diphosphate. It carries out the reaction (2E)-geranyl diphosphate = sabinene + diphosphate. The protein operates within secondary metabolite biosynthesis; terpenoid biosynthesis. Functionally, monoterpene synthase (TPS) involved in the biosynthesis of monoterpene natural products, components of the chemical defense arsenal. Catalyzes the conversion of (2E)-geranyl diphosphate (GPP) into 1,8-cineole, and, as minor products, alpha-terpineol, beta-pinene, alpha-pinene, sabinene and myrcene. The protein is Cineole synthase 1, chloroplastic of Salvia fruticosa (Greek sage).